The primary structure comprises 216 residues: Ribosomal RNA small subunit methyltransferase G (216 aa).

S-adenosyl-L-methionine-binding positions include Gly-81, Leu-86, Val-132 to Glu-133, and Arg-147.

This sequence belongs to the methyltransferase superfamily. RNA methyltransferase RsmG family.

It is found in the cytoplasm. It carries out the reaction guanosine(527) in 16S rRNA + S-adenosyl-L-methionine = N(7)-methylguanosine(527) in 16S rRNA + S-adenosyl-L-homocysteine. Functionally, specifically methylates the N7 position of guanine in position 527 of 16S rRNA. This chain is Ribosomal RNA small subunit methyltransferase G, found in Hydrogenovibrio crunogenus (strain DSM 25203 / XCL-2) (Thiomicrospira crunogena).